Here is a 267-residue protein sequence, read N- to C-terminus: Putative F-box protein At5g38810 (267 aa).

The 50-residue stretch at 4–53 (RKTFDSIPDDLFVEIALRLSSKSIARCRCVSKLWASILYRQDFTELFITK) folds into the F-box domain.

The sequence is that of Putative F-box protein At5g38810 from Arabidopsis thaliana (Mouse-ear cress).